Here is a 168-residue protein sequence, read N- to C-terminus: Ribosome maturation factor RimM (168 aa).

In terms of domain architecture, PRC barrel spans 93–168 (EDEFYQSDLV…IVLNIPEFID (76 aa)).

This sequence belongs to the RimM family. In terms of assembly, binds ribosomal protein uS19.

It is found in the cytoplasm. Functionally, an accessory protein needed during the final step in the assembly of 30S ribosomal subunit, possibly for assembly of the head region. Essential for efficient processing of 16S rRNA. May be needed both before and after RbfA during the maturation of 16S rRNA. It has affinity for free ribosomal 30S subunits but not for 70S ribosomes. This Wolbachia pipientis wMel protein is Ribosome maturation factor RimM.